Reading from the N-terminus, the 300-residue chain is MTSIDWRSALTDDEQGSIRDIVAAATRHDGVAPVGDQVLRELPADRTRHLVAVDPDAGAVVGYLNLAPASDTAPPMAELVVHPDFRRRGTGAAMARAGLAEGGTHARIWAHGNLEAARATARTLGLQVVRELLQMRRPLTDLPPVTVADGVRLATYSGPGDDPELLRINNSAFAWHPEQGGWTDADIAERRAEAWFDPAGLFMAFDDASGKLLGFHWTKVHGPDLGEVYVVGVDPAAQGRGLGATLTLTGLHHLAERLSNSPQPTVMLYVEADNGAAVKTYRRLGFDVSSVDAAYAAVAD.

2 consecutive N-acetyltransferase domains span residues 4–140 (IDWR…RPLT) and 151–300 (VRLA…AVAD). Aspartate 36 serves as a coordination point for 1D-myo-inositol 2-(L-cysteinylamino)-2-deoxy-alpha-D-glucopyranoside. Residue 79 to 81 (LVV) participates in acetyl-CoA binding. 3 residues coordinate 1D-myo-inositol 2-(L-cysteinylamino)-2-deoxy-alpha-D-glucopyranoside: glutamate 178, lysine 219, and glutamate 227. 231-233 (VGV) contacts acetyl-CoA. Position 269 (tyrosine 269) interacts with 1D-myo-inositol 2-(L-cysteinylamino)-2-deoxy-alpha-D-glucopyranoside. An acetyl-CoA-binding site is contributed by 274–279 (NGAAVK).

It belongs to the acetyltransferase family. MshD subfamily. As to quaternary structure, monomer.

It carries out the reaction 1D-myo-inositol 2-(L-cysteinylamino)-2-deoxy-alpha-D-glucopyranoside + acetyl-CoA = mycothiol + CoA + H(+). In terms of biological role, catalyzes the transfer of acetyl from acetyl-CoA to desacetylmycothiol (Cys-GlcN-Ins) to form mycothiol. In Mycobacterium sp. (strain MCS), this protein is Mycothiol acetyltransferase.